We begin with the raw amino-acid sequence, 73 residues long: Large ribosomal subunit protein uL30 (73 aa).

This sequence belongs to the universal ribosomal protein uL30 family. Part of the 50S ribosomal subunit.

The polypeptide is Large ribosomal subunit protein uL30 (Borreliella afzelii (strain PKo) (Borrelia afzelii)).